The primary structure comprises 212 residues: FMN-dependent NADH:quinone oxidoreductase (212 aa).

FMN is bound by residues S10 and 17 to 19; that span reads SFS.

This sequence belongs to the azoreductase type 1 family. Homodimer. Requires FMN as cofactor.

It carries out the reaction 2 a quinone + NADH + H(+) = 2 a 1,4-benzosemiquinone + NAD(+). It catalyses the reaction N,N-dimethyl-1,4-phenylenediamine + anthranilate + 2 NAD(+) = 2-(4-dimethylaminophenyl)diazenylbenzoate + 2 NADH + 2 H(+). Functionally, quinone reductase that provides resistance to thiol-specific stress caused by electrophilic quinones. Also exhibits azoreductase activity. Catalyzes the reductive cleavage of the azo bond in aromatic azo compounds to the corresponding amines. This Malacoplasma penetrans (strain HF-2) (Mycoplasma penetrans) protein is FMN-dependent NADH:quinone oxidoreductase.